The primary structure comprises 226 residues: Ribonuclease 3 (226 aa).

In terms of domain architecture, RNase III spans 6–128; it reads INRLQRKLGY…LIGGIFLDSD (123 aa). Mg(2+) is bound at residue E41. D45 is an active-site residue. The Mg(2+) site is built by D114 and E117. Residue E117 is part of the active site. The DRBM domain maps to 155 to 225; sequence DPKTRLQEFL…AEQALKQLEL (71 aa).

This sequence belongs to the ribonuclease III family. Homodimer. Requires Mg(2+) as cofactor.

Its subcellular location is the cytoplasm. The catalysed reaction is Endonucleolytic cleavage to 5'-phosphomonoester.. Its function is as follows. Digests double-stranded RNA. Involved in the processing of primary rRNA transcript to yield the immediate precursors to the large and small rRNAs (23S and 16S). Processes some mRNAs, and tRNAs when they are encoded in the rRNA operon. Processes pre-crRNA and tracrRNA of type II CRISPR loci if present in the organism. This chain is Ribonuclease 3, found in Edwardsiella ictaluri (strain 93-146).